The sequence spans 1427 residues: Protein NPAT (1427 aa).

The tract at residues 1–318 (MLLPSDVARL…EEAIQDILEQ (318 aa)) is interaction with MIZF. In terms of domain architecture, LisH spans 3–35 (LPSDVARLVLGYLQQENLISTCQTFILESSDLK). Required for activation of histone gene transcription and interaction with MIZF regions lie at residues 5 to 25 (SDVA…STCQ) and 121 to 145 (KRQR…YLSG). Residues 199–231 (KKAHASLMSPGRRKSESQRKSTTLSGPHSTIRN) form a disordered region. A Phosphoserine modification is found at Ser207. Positions 218–231 (KSTTLSGPHSTIRN) are enriched in polar residues. A mediates transcriptional activation region spans residues 262–338 (KLAENINKFL…FDLFDYGKTK (77 aa)). A phosphoserine mark is found at Ser554 and Ser599. The span at 628 to 644 (SLSSTKQPSNDSASVEL) shows a compositional bias: polar residues. 2 disordered regions span residues 628 to 669 (SLSS…VKEE) and 683 to 732 (EKVA…SAEI). The segment at 629 to 653 (LSSTKQPSNDSASVELNHTENEAQA) is required for acceleration of G1 phase. Low complexity predominate over residues 654-665 (SKSENSQEPSSS). Residues 695–711 (VENSHSLPPESVCSSVG) show a composition bias toward polar residues. 2 positions are modified to phosphoserine; by CDK2: Ser775 and Ser779. 2 required for acceleration of G1 phase regions span residues 828–853 (QNED…IQLM) and 1039–1054 (KSEE…SIVP). Disordered stretches follow at residues 1095 to 1121 (FPNL…EKEK) and 1133 to 1152 (SAIS…KVSP). Polar residues predominate over residues 1097–1114 (NLDSPNVSSTLKPPSNNA). Residue Ser1100 is modified to Phosphoserine; by CDK2. Glycyl lysine isopeptide (Lys-Gly) (interchain with G-Cter in SUMO2) cross-links involve residues Lys1116 and Lys1149. The segment covering 1140–1151 (TIRETQSEKKVS) has biased composition (basic and acidic residues). Phosphoserine occurs at positions 1151 and 1200. Lys1228 is subject to N6-acetyllysine. Residues 1228–1252 (KDLKQEQTKSASSLITTEMLQDIQR) are required for acceleration of G1 phase. 2 disordered regions span residues 1253 to 1327 (HSSV…SENS) and 1348 to 1413 (SATP…FPAG). Ser1254 carries the post-translational modification Phosphoserine. Thr1270 is subject to Phosphothreonine; by CDK2. Residues 1276 to 1285 (GEKHKEEPID) are compositionally biased toward basic and acidic residues. Residue Lys1280 forms a Glycyl lysine isopeptide (Lys-Gly) (interchain with G-Cter in SUMO2) linkage. A required for acceleration of G1 phase region spans residues 1325-1349 (ENSVNMAAHTLMILSRAAISRTTSA). Polar residues predominate over residues 1348 to 1365 (SATPLKDNTQQFRASSRS). Phosphothreonine; by CDK2 is present on Thr1350. A compositionally biased stretch (basic and acidic residues) spans 1371–1382 (KIEELDERERNS). The segment covering 1383–1394 (RPSSKNLTNSSI) has biased composition (polar residues). Basic residues predominate over residues 1396-1406 (MKKKKIKKKKL).

The protein belongs to the NPAT family. As to quaternary structure, interacts with the cylin/CDK complexes CCNE1/CDK2 and CCNA1/CDK2. Interacts with BZW1, CASP8AP2, CREBBP, MIZF and YY1. Interacts with the RUVBL1, RUVBL2 and TRRAP subunits of the NuA4 complex. May also interact with GAPDH, NME1, NME2 and STIP1. Post-translationally, phosphorylated at Ser-775, Ser-779, Ser-1100, Thr-1270 and Thr-1350 by CCNE1/CDK2 at G1-S transition and until prophase, which promotes association with histone gene clusters and stimulates activation of histone transcription. Also phosphorylated by CCNA1/CDK2 in vitro. In terms of tissue distribution, ubiquitously expressed.

The protein resides in the nucleus. It localises to the cajal body. In terms of biological role, required for progression through the G1 and S phases of the cell cycle and for S phase entry. Activates transcription of the histone H2A, histone H2B, histone H3 and histone H4 genes in conjunction with MIZF. Also positively regulates the ATM, MIZF and PRKDC promoters. Transcriptional activation may be accomplished at least in part by the recruitment of the NuA4 histone acetyltransferase (HAT) complex to target gene promoters. This is Protein NPAT (NPAT) from Homo sapiens (Human).